We begin with the raw amino-acid sequence, 1206 residues long: DNA-directed RNA polymerase subunit beta' (1206 aa).

Zn(2+)-binding residues include Cys60, Cys62, Cys75, and Cys78. Mg(2+) is bound by residues Asp449, Asp451, and Asp453. Residues Cys818, Cys892, Cys899, and Cys902 each contribute to the Zn(2+) site.

The protein belongs to the RNA polymerase beta' chain family. As to quaternary structure, the RNAP catalytic core consists of 2 alpha, 1 beta, 1 beta' and 1 omega subunit. When a sigma factor is associated with the core the holoenzyme is formed, which can initiate transcription. It depends on Mg(2+) as a cofactor. Zn(2+) serves as cofactor.

It carries out the reaction RNA(n) + a ribonucleoside 5'-triphosphate = RNA(n+1) + diphosphate. In terms of biological role, DNA-dependent RNA polymerase catalyzes the transcription of DNA into RNA using the four ribonucleoside triphosphates as substrates. The polypeptide is DNA-directed RNA polymerase subunit beta' (Shouchella clausii (strain KSM-K16) (Alkalihalobacillus clausii)).